Here is a 144-residue protein sequence, read N- to C-terminus: D-aminoacyl-tRNA deacylase (144 aa).

A Gly-cisPro motif, important for rejection of L-amino acids motif is present at residues Gly-136–Pro-137.

The protein belongs to the DTD family. In terms of assembly, homodimer.

It is found in the cytoplasm. The enzyme catalyses glycyl-tRNA(Ala) + H2O = tRNA(Ala) + glycine + H(+). It catalyses the reaction a D-aminoacyl-tRNA + H2O = a tRNA + a D-alpha-amino acid + H(+). In terms of biological role, an aminoacyl-tRNA editing enzyme that deacylates mischarged D-aminoacyl-tRNAs. Also deacylates mischarged glycyl-tRNA(Ala), protecting cells against glycine mischarging by AlaRS. Acts via tRNA-based rather than protein-based catalysis; rejects L-amino acids rather than detecting D-amino acids in the active site. By recycling D-aminoacyl-tRNA to D-amino acids and free tRNA molecules, this enzyme counteracts the toxicity associated with the formation of D-aminoacyl-tRNA entities in vivo and helps enforce protein L-homochirality. The sequence is that of D-aminoacyl-tRNA deacylase from Haemophilus influenzae (strain PittGG).